The sequence spans 632 residues: Putative ankyrin repeat protein L767 (632 aa).

ANK repeat units lie at residues 61 to 97 (YGNTFMTNRIIKNTKYSLLDVNTVQMLLDYGDPDYEF), 228 to 250 (FDNEKLFYTVLYDSFELTKYIVE), 251 to 282 (KGFYYDFDSVINSDINLEMLKFFIELGNNLTD), 345 to 374 (NLDILMKTSILRENINMIKKCIEYGINVDD), and 517 to 546 (NSIELLFVVVLSENIDLFKLLLEINCNDTD).

The polypeptide is Putative ankyrin repeat protein L767 (Acanthamoeba polyphaga mimivirus (APMV)).